The sequence spans 260 residues: Tropinone reductase 2 (260 aa).

18-41 is a binding site for NADP(+); that stretch reads SRGIGYGIVEELASLGASVYTCSR. S146 serves as a coordination point for substrate. Catalysis depends on Y159, which acts as the Proton acceptor. Residue 192–196 participates in NADP(+) binding; sequence IATSL.

This sequence belongs to the short-chain dehydrogenases/reductases (SDR) family. As to quaternary structure, homodimer.

It carries out the reaction pseudotropine + NADP(+) = tropinone + NADPH + H(+). It functions in the pathway alkaloid biosynthesis; tropane alkaloid biosynthesis. Functionally, catalyzes the stereospecific reduction of tropinone to pseudotropine. In Datura stramonium (Jimsonweed), this protein is Tropinone reductase 2 (TR2).